The following is a 176-amino-acid chain: Ribosome maturation factor RimM (176 aa).

The PRC barrel domain maps to 99 to 173 (KEGEFHLVDL…WLLIKPPPGL (75 aa)).

Belongs to the RimM family. As to quaternary structure, binds ribosomal protein uS19.

It is found in the cytoplasm. Functionally, an accessory protein needed during the final step in the assembly of 30S ribosomal subunit, possibly for assembly of the head region. Essential for efficient processing of 16S rRNA. May be needed both before and after RbfA during the maturation of 16S rRNA. It has affinity for free ribosomal 30S subunits but not for 70S ribosomes. This chain is Ribosome maturation factor RimM, found in Prochlorococcus marinus (strain MIT 9211).